The chain runs to 427 residues: Inward rectifier potassium channel 2 (427 aa).

The Cytoplasmic segment spans residues 1–81; it reads MGSVRTNRYS…IFTTCVDIRW (81 aa). Cys76 carries the S-nitrosocysteine modification. Residues 82–106 form a helical membrane-spanning segment; sequence RWMLVIFCLAFVLSWLFFGCVFWLI. The Extracellular segment spans residues 107–128; sequence ALLHGDLDASKEGKACVSEVNS. Residues 129-140 constitute an intramembrane region (helical; Pore-forming); sequence FTAAFLFSIETQ. An intramembrane region (pore-forming) is located at residues 141–147; the sequence is TTIGYGF. Residues 142-147 carry the Selectivity filter motif; it reads TIGYGF. Residues 148 to 156 are Extracellular-facing; that stretch reads RCVTDECPI. A helical membrane pass occupies residues 157–178; sequence AVFMVVFQSIVGCIIDAFIIGA. At 179 to 427 the chain is on the cytoplasmic side; it reads VMAKMAKPKK…PRPLRRESEI (249 aa). Positions 181–208 are polyphosphoinositide (PIP2)-binding; that stretch reads AKMAKPKKRNETLVFSHNAVIAMRDGKL. The tract at residues 384–427 is disordered; sequence SKEEDDSENGVPESTSTDTPPDIDLHNQASVPLEPRPLRRESEI. Residues 425–427 carry the PDZ-binding motif; the sequence is SEI.

The protein belongs to the inward rectifier-type potassium channel (TC 1.A.2.1) family. KCNJ2 subfamily. In terms of assembly, homotetramer. Homomultimeric and heteromultimeric association with KCNJ4/Kir2.3. Can form heteromeric channels with Kir2.6/KCNJ18. Associates, via its PDZ-recognition domain, with a complex containing LIN7A, LIN7B, LIN7C, DLG1, CASK and APBA1. In terms of processing, S-nitrosylation increases the open probability and inward rectifying currents.

Its subcellular location is the cell membrane. The protein localises to the sarcolemma. The protein resides in the T-tubule. The enzyme catalyses K(+)(in) = K(+)(out). Its activity is regulated as follows. Activated by phosphatidylinositol 4,5 biphosphate (PtdIns(4,5)P2). Inward rectifier potassium channels are characterized by a greater tendency to allow potassium to flow into the cell rather than out of it. Their voltage dependence is regulated by the concentration of extracellular potassium; as external potassium is raised, the voltage range of the channel opening shifts to more positive voltages. The inward rectification is mainly due to the blockage of outward current by internal magnesium. Can be blocked by extracellular barium or cesium. Probably participates in establishing action potential waveform and excitability of neuronal and muscle tissues. The protein is Inward rectifier potassium channel 2 (KCNJ2) of Macaca mulatta (Rhesus macaque).